Consider the following 846-residue polypeptide: Pseudolaratriene synthase, chloroplastic (846 aa).

The transit peptide at 1–58 (MSRFTSATHGLNLSIKMPISVSQVPSIRSNTSKYELQKLRSTGRSVLQTRRQLAIINM) directs the protein to the chloroplast. Mg(2+) contacts are provided by D595, D599, and D747. Residues 595–599 (DDIYD) carry the DDXXD motif motif.

The protein belongs to the terpene synthase family. Mg(2+) is required as a cofactor. As to expression, expressed in young and mature roots. Expressed at low levels in barks.

The protein localises to the plastid. It is found in the chloroplast. The enzyme catalyses (2E,6E,10E)-geranylgeranyl diphosphate = pseudolaratriene + diphosphate. It participates in terpene metabolism. In terms of biological role, converts geranylgeranyl diphosphate to an new 5,7-fused bicyclic diterpene, named pseudolaratriene. Catalyzes the first committed step in pseudolaric acid B (PAB) biosynthesis. PAB exhibits antiproliferative activity by inhibiting microtubule polymerization, and has demonstrated antitumor properties against several cancer types. In Pseudolarix amabilis (Golden larch), this protein is Pseudolaratriene synthase, chloroplastic.